The chain runs to 535 residues: Peptide chain release factor 3 (535 aa).

The tr-type G domain occupies Lys-8 to Gly-277. GTP contacts are provided by residues Ser-17–Thr-24, Asp-85–His-89, and Asn-139–Asp-142.

This sequence belongs to the TRAFAC class translation factor GTPase superfamily. Classic translation factor GTPase family. PrfC subfamily.

It localises to the cytoplasm. Functionally, increases the formation of ribosomal termination complexes and stimulates activities of RF-1 and RF-2. It binds guanine nucleotides and has strong preference for UGA stop codons. It may interact directly with the ribosome. The stimulation of RF-1 and RF-2 is significantly reduced by GTP and GDP, but not by GMP. The sequence is that of Peptide chain release factor 3 from Nitrosomonas europaea (strain ATCC 19718 / CIP 103999 / KCTC 2705 / NBRC 14298).